Consider the following 182-residue polypeptide: Ribosome maturation factor RimM (182 aa).

In terms of domain architecture, PRC barrel spans 102–182 (GEGDYYWKDL…TIEVDWDPGF (81 aa)).

The protein belongs to the RimM family. As to quaternary structure, binds ribosomal protein uS19.

The protein resides in the cytoplasm. Functionally, an accessory protein needed during the final step in the assembly of 30S ribosomal subunit, possibly for assembly of the head region. Essential for efficient processing of 16S rRNA. May be needed both before and after RbfA during the maturation of 16S rRNA. It has affinity for free ribosomal 30S subunits but not for 70S ribosomes. The sequence is that of Ribosome maturation factor RimM from Pectobacterium carotovorum subsp. carotovorum (strain PC1).